Here is a 254-residue protein sequence, read N- to C-terminus: Uridine-cytidine kinase 1 (254 aa).

A disordered region spans residues 1–29; the sequence is MASAGGDECEGAAPEADRPHQRPFLIGVS. 30–38 is a binding site for ATP; that stretch reads GGTASGKST. Asp87, Tyr115, His120, Arg146, Arg155, and Gln163 together coordinate substrate. An ATP-binding site is contributed by Asp192. The interval 224–254 is disordered; the sequence is SYKRTFSEPGDHPGMLTSGKRSHLESSSRPH. Thr228 is subject to Phosphothreonine. Ser230 is subject to Phosphoserine. A compositionally biased stretch (basic and acidic residues) spans 245 to 254; sequence SHLESSSRPH.

It belongs to the uridine kinase family.

The enzyme catalyses uridine + ATP = UMP + ADP + H(+). The catalysed reaction is cytidine + ATP = CMP + ADP + H(+). It functions in the pathway pyrimidine metabolism; CTP biosynthesis via salvage pathway; CTP from cytidine: step 1/3. The protein operates within pyrimidine metabolism; UMP biosynthesis via salvage pathway; UMP from uridine: step 1/1. Phosphorylates uridine and cytidine to uridine monophosphate and cytidine monophosphate. Does not phosphorylate deoxyribonucleosides or purine ribonucleosides. Can use ATP or GTP as a phosphate donor. The polypeptide is Uridine-cytidine kinase 1 (UCK1) (Macaca fascicularis (Crab-eating macaque)).